Reading from the N-terminus, the 174-residue chain is Ribosome maturation factor RimM (174 aa).

In terms of domain architecture, PRC barrel spans 98 to 171; the sequence is EDEFYFHEII…KIKIHVMEGL (74 aa).

This sequence belongs to the RimM family. As to quaternary structure, binds ribosomal protein uS19.

Its subcellular location is the cytoplasm. Its function is as follows. An accessory protein needed during the final step in the assembly of 30S ribosomal subunit, possibly for assembly of the head region. Essential for efficient processing of 16S rRNA. May be needed both before and after RbfA during the maturation of 16S rRNA. It has affinity for free ribosomal 30S subunits but not for 70S ribosomes. This chain is Ribosome maturation factor RimM, found in Bacillus velezensis (strain DSM 23117 / BGSC 10A6 / LMG 26770 / FZB42) (Bacillus amyloliquefaciens subsp. plantarum).